The chain runs to 293 residues: Glycine--tRNA ligase alpha subunit (293 aa).

The protein belongs to the class-II aminoacyl-tRNA synthetase family. Tetramer of two alpha and two beta subunits.

The protein resides in the cytoplasm. It carries out the reaction tRNA(Gly) + glycine + ATP = glycyl-tRNA(Gly) + AMP + diphosphate. The protein is Glycine--tRNA ligase alpha subunit of Prochlorococcus marinus (strain MIT 9211).